A 95-amino-acid polypeptide reads, in one-letter code: Aspartyl/glutamyl-tRNA(Asn/Gln) amidotransferase subunit C (95 aa).

It belongs to the GatC family. Heterotrimer of A, B and C subunits.

The enzyme catalyses L-glutamyl-tRNA(Gln) + L-glutamine + ATP + H2O = L-glutaminyl-tRNA(Gln) + L-glutamate + ADP + phosphate + H(+). It catalyses the reaction L-aspartyl-tRNA(Asn) + L-glutamine + ATP + H2O = L-asparaginyl-tRNA(Asn) + L-glutamate + ADP + phosphate + 2 H(+). Allows the formation of correctly charged Asn-tRNA(Asn) or Gln-tRNA(Gln) through the transamidation of misacylated Asp-tRNA(Asn) or Glu-tRNA(Gln) in organisms which lack either or both of asparaginyl-tRNA or glutaminyl-tRNA synthetases. The reaction takes place in the presence of glutamine and ATP through an activated phospho-Asp-tRNA(Asn) or phospho-Glu-tRNA(Gln). In Syntrophotalea carbinolica (strain DSM 2380 / NBRC 103641 / GraBd1) (Pelobacter carbinolicus), this protein is Aspartyl/glutamyl-tRNA(Asn/Gln) amidotransferase subunit C.